Here is a 290-residue protein sequence, read N- to C-terminus: RIO-type serine/threonine-protein kinase Rio1 (290 aa).

Residues 76–290 (TEYIGIVNSG…PIDEAMIKQL (215 aa)) enclose the Protein kinase domain. Residues 82-90 (VNSGKEAVV) and Lys103 contribute to the ATP site. Catalysis depends on Asp214, which acts as the Proton acceptor. Mg(2+) contacts are provided by Asn219 and Asp231. Residue Asp231 is the 4-aspartylphosphate intermediate of the active site.

The protein belongs to the protein kinase superfamily. RIO-type Ser/Thr kinase family.

It catalyses the reaction L-seryl-[protein] + ATP = O-phospho-L-seryl-[protein] + ADP + H(+). It carries out the reaction L-threonyl-[protein] + ATP = O-phospho-L-threonyl-[protein] + ADP + H(+). The enzyme catalyses ATP + H2O = ADP + phosphate + H(+). Despite the protein kinase domain is proposed to act predominantly as an ATPase. This Methanocaldococcus jannaschii (strain ATCC 43067 / DSM 2661 / JAL-1 / JCM 10045 / NBRC 100440) (Methanococcus jannaschii) protein is RIO-type serine/threonine-protein kinase Rio1 (rio1).